The sequence spans 851 residues: DNA mismatch repair protein MutS (851 aa).

602 to 609 (GPNMSGKS) contributes to the ATP binding site.

Belongs to the DNA mismatch repair MutS family.

Functionally, this protein is involved in the repair of mismatches in DNA. It is possible that it carries out the mismatch recognition step. This protein has a weak ATPase activity. In Streptococcus pyogenes serotype M49 (strain NZ131), this protein is DNA mismatch repair protein MutS.